Reading from the N-terminus, the 385-residue chain is Odorant receptor 47a (385 aa).

Residues 1-33 are Cytoplasmic-facing; that stretch reads MDSFLQVQKSTIALLGFDLFSENREMWKRPYRA. A helical membrane pass occupies residues 34–54; sequence MNVFSIAAIFPFILAAVLHNW. Topologically, residues 55-62 are extracellular; the sequence is KNVLLLAD. Residues 63–83 traverse the membrane as a helical segment; sequence AMVALLITILGLFKFSMILYL. The Cytoplasmic portion of the chain corresponds to 84 to 129; sequence RRDFKRLIDKFRLLMSNEAEQGEEYAEILNAANKQDQRMCTLFRTC. A helical transmembrane segment spans residues 130–150; it reads FLLAWALNSVLPLVRMGLSYW. The Extracellular segment spans residues 151–175; the sequence is LAGHAEPELPFPCLFPWNIHIIRNY. A helical transmembrane segment spans residues 176–196; that stretch reads VLSFIWSAFASTGVVLPAVSL. Topologically, residues 197–255 are cytoplasmic; that stretch reads DTIFCSFTSNLCAFFKIAQYKVVRFKGGSLKESQATLNKVFALYQTSLDMCNDLNQCYQ. A helical membrane pass occupies residues 256–276; it reads PIICAQFFISSLQLCMLGYLF. At 277–284 the chain is on the extracellular side; sequence SITFAQTE. The chain crosses the membrane as a helical span at residues 285–305; that stretch reads GVYYASFIATIIIQAYIYCYC. Over 306-357 the chain is Cytoplasmic; that stretch reads GENLKTESASFEWAIYDSPWHESLGAGGASTSICRSLLISMMRAHRGFRITG. The helical transmembrane segment at 358–378 threads the bilayer; it reads YFFEANMEAFSSIVRTAMSYI. Over 379–385 the chain is Extracellular; that stretch reads TMLRSFS.

It belongs to the insect chemoreceptor superfamily. Heteromeric odorant receptor channel (TC 1.A.69) family. Or1a subfamily. As to quaternary structure, interacts with Orco. Complexes exist early in the endomembrane system in olfactory sensory neurons (OSNs), coupling these complexes to the conserved ciliary trafficking pathway. As to expression, expressed with Orco in 40 olfactory receptor neurons in a broad area across the antenna, including both anterior and posterior faces. This expression pattern matches the distribution of the small sensilla basiconica. Expression in the antenna is observed late in antennal development at 93 hours APF.

It is found in the cell membrane. Functionally, odorant receptor which mediates acceptance or avoidance behavior, depending on its substrates. The odorant receptor repertoire encodes a large collection of odor stimuli that vary widely in identity, intensity, and duration. Complexes with Orco to form odorant-sensing units, providing sensitive and prolonged odorant signaling and calcium permeability. They are necessary and sufficient to promote functional reconstitution of odor-evoked signaling in sensory neurons that normally respond only to carbon dioxide. Involved in the behavioral responses to esters. Involved in the behavioral responses to pentyl acetate. The sequence is that of Odorant receptor 47a (Or47a) from Drosophila melanogaster (Fruit fly).